The primary structure comprises 234 residues: Protein SOP4 (234 aa).

Positions 1–18 are cleaved as a signal peptide; it reads MFSQIVLLLSAFIYVVSA. Over 19–188 the chain is Lumenal; sequence TARRGTIKGR…VGNILNSRWK (170 aa). N-linked (GlcNAc...) asparagine glycosylation is found at Asn-35, Asn-53, Asn-85, Asn-115, and Asn-170. Residues 189-209 traverse the membrane as a helical segment; that stretch reads LAGVITLIALVVFPIIVEKLD. The Cytoplasmic segment spans residues 210-234; it reads PETARAIREEAKRKQREKYAAVASK.

The protein belongs to the SOP4 family.

Its subcellular location is the endoplasmic reticulum membrane. Functionally, involved in the export of PMA1, possibly through the monitoring or assisting of PMA1 folding and acquisition of competence to enter vesicles. The chain is Protein SOP4 (SOP4) from Saccharomyces cerevisiae (strain YJM789) (Baker's yeast).